Reading from the N-terminus, the 1163-residue chain is MLERSLLLATLLSALCSANLFGNNSYVYYYQSAFRPSDGWHLHGGAYEVVNVSTESSNAGTTGCTAGAIYWSKNFSAASVAMTAPQNGMSWSTEQFCTAHCNFTDFVVFVTHCYKSGHGSCPLTGLIPQNHIRISAMKNSSLFYNLTVAVTKYPRFKSLQCVNNMTSVYLNGDLVFTSNETKDVSAAGVHFKAGGPITYKVMREVKALAYFVNGTAQDVILCDGSPTGLLACQYNTGNFSDGFYPFTNSSLVKEKFIVYRESSVNTTLELTNFTFSNVSNATPNTGGVQTIQLYQTITAQSGYYNLNFSFLSSFIYKASDYMYGSYHPSCKFRLETINNGLWFNSLSVSLGYGPIQGGCKQSVFANRATCCYAYSYNGPSLCKGVYRGELTKSFECGLLVFVTKTDGSRIQTRNEPFTLTQHNYNNITLDRCVEYNIYGRVGQGFITNVTNYAINYNYLADGGMAILDTSGAIDIFVVQGEYGLNYYKVNPCEDVNQQFVVSGGKLVGILTSRNETGSQPLENQFYIKIINGTRRSRRSITGNVTNCPYVTYGKFCIKPDGSISTIVPKELEHFVAPLLNVTENVLIPDSFNLTVTDEYIQTRMDKVQINCLQYVCGNSLECRKLFQQYGPVCDNILSVVNSVGQKEDMELLYFYSSTKPSGFNTPVLSNVSTGEFNISLLLTPPSSASGRSFIEDLLFTSVESVGLPTDDAYKKCTAGPLGFLKDLACAREYNGLLVLPPIITAEMQTLYTSSLVASMAFGGITSAGAIPFATQLQARINHLGITQSLLFKNQEKIAASFNKAIGHMQEGFRSTSLALQQIQDVVNKQSSILTETMASLNKNFGAISSVLQDIYQQLDSIQADAQVDRIITGRLSSLSVLASAKQAEYYRVSQQRELATQKINECVKSQSIRYSFCGNGRHVLTIPQNAPNGIVFIHFTYTPESFVNVTAIVGFCVNPANASQYAIVPANGRGIFIQVNGSYYITARDMYMPRDITAGDIVTLTSCQANYVSVNKTVITTFVDNDDFDFDDELSKWWNDTKHELPDFDEFNYTVPILDIGSEIDRIQGVIQGLNDSLIDLETLSILKTYIKWPWYVWLAIAFLTIIFILVLCWIFFMTGCCGCCCGCFGIIPLMSKCGKKSSYYTTFDNDVVYEQYRPKKSV.

An N-terminal signal peptide occupies residues 1–18 (MLERSLLLATLLSALCSA). At 19–1096 (NLFGNNSYVY…LKTYIKWPWY (1078 aa)) the chain is on the extracellular side. N-linked (GlcNAc...) asparagine; by host glycosylation is found at Asn-23, Asn-51, Asn-74, Asn-102, Asn-139, Asn-145, Asn-164, Asn-179, Asn-213, Asn-238, Asn-248, Asn-265, Asn-272, Asn-277, Asn-307, Asn-426, Asn-448, Asn-514, Asn-531, Asn-543, Asn-580, Asn-592, Asn-670, and Asn-677. A heptad repeat 1 (HR1) region spans residues 770–875 (IPFATQLQAR…QVDRIITGRL (106 aa)). Residues 823–867 (QDVVNKQSSILTETMASLNKNFGAISSVLQDIYQQLDSIQADAQV) adopt a coiled-coil conformation. Residues Asn-948, Asn-961, Asn-980, Asn-1015, Asn-1039, Asn-1052, and Asn-1075 are each glycosylated (N-linked (GlcNAc...) asparagine; by host). The interval 1025–1106 (NDDFDFDDEL…VWLAIAFLTI (82 aa)) is heptad repeat 2 (HR2). Residues 1056-1084 (PILDIGSEIDRIQGVIQGLNDSLIDLETL) are a coiled coil. Residues 1097 to 1117 (VWLAIAFLTIIFILVLCWIFF) traverse the membrane as a helical segment. Residues 1118–1163 (MTGCCGCCCGCFGIIPLMSKCGKKSSYYTTFDNDVVYEQYRPKKSV) lie on the Cytoplasmic side of the membrane. Residues 1160–1163 (KKSV) carry the Di-lysine motif motif.

The protein belongs to the gammacoronaviruses spike protein family. As to quaternary structure, homotrimer; each monomer consists of a S1 and a S2 subunit. The resulting peplomers protrude from the virus surface as spikes. In terms of processing, specific enzymatic cleavages in vivo yield mature proteins. The precursor is processed into S1 and S2 by host cell furin or furin-like protease to yield the mature S1 and S2 proteins. The cleavage site between S1 and S2 requires the optimal sequence [KR]-X-[KR]-R. Additionally, a second cleavage leads to the release of a fusion peptide after viral attachment to host cell receptor.

It localises to the virion membrane. Its subcellular location is the host endoplasmic reticulum-Golgi intermediate compartment membrane. Functionally, attaches the virion to the host cell membrane by interacting with sialic acids, initiating the infection. Mediates fusion of the virion and cellular membranes by acting as a class I viral fusion protein. Under the current model, the protein has at least 3 conformational states: pre-fusion native state, pre-hairpin intermediate state, and post-fusion hairpin state. During viral and target cell membrane fusion, the coiled coil regions (heptad repeats) assume a trimer-of-hairpins structure, positioning the fusion peptide in close proximity to the C-terminal region of the ectodomain. The formation of this structure appears to drive apposition and subsequent fusion of viral and target cell membranes. In terms of biological role, acts as a viral fusion peptide after S2 cleavage occurring upon virus endocytosis. The protein is Spike glycoprotein of Gallus gallus (Chicken).